Reading from the N-terminus, the 145-residue chain is Large ribosomal subunit protein uL15 (145 aa).

A disordered region spans residues 1–55 (MSLLKTLAPKAGSKHAPKRIGRGIGSGMGGTATKGHKGQLARTGGTVRRGFEGGQ). Over residues 12–21 (GSKHAPKRIG) the composition is skewed to basic residues. Gly residues predominate over residues 22-32 (RGIGSGMGGTA).

This sequence belongs to the universal ribosomal protein uL15 family. Part of the 50S ribosomal subunit.

In terms of biological role, binds to the 23S rRNA. This Bdellovibrio bacteriovorus (strain ATCC 15356 / DSM 50701 / NCIMB 9529 / HD100) protein is Large ribosomal subunit protein uL15.